We begin with the raw amino-acid sequence, 273 residues long: Large ribosomal subunit protein uL2 (273 aa).

Disordered regions lie at residues 28 to 53 (KPFA…TTRH) and 221 to 273 (RGTA…RRSK). Positions 39-48 (KSGGRNNNGR) are enriched in low complexity. An N6-acetyllysine modification is found at Lys242.

The protein belongs to the universal ribosomal protein uL2 family. As to quaternary structure, part of the 50S ribosomal subunit. Forms a bridge to the 30S subunit in the 70S ribosome.

One of the primary rRNA binding proteins. Required for association of the 30S and 50S subunits to form the 70S ribosome, for tRNA binding and peptide bond formation. It has been suggested to have peptidyltransferase activity; this is somewhat controversial. Makes several contacts with the 16S rRNA in the 70S ribosome. The sequence is that of Large ribosomal subunit protein uL2 from Shigella dysenteriae serotype 1 (strain Sd197).